We begin with the raw amino-acid sequence, 536 residues long: Transcriptional regulator RPN4 (536 aa).

2 stretches are compositionally biased toward low complexity: residues 154–181 (QEQQ…QQQQ) and 361–370 (SPSAISPASP). 3 disordered regions span residues 154-196 (QEQQ…TRRR), 353-375 (VFDQ…SDDM), and 393-434 (EEIN…AEIT). The segment covering 393–411 (EEINKKHSKSGKKESKSQK) has biased composition (basic and acidic residues). Residues 440 to 471 (HQCNLINPSTGEPCNKQFSRPYDLIRHQDTIH) form a C2H2-type zinc finger.

Its subcellular location is the nucleus. In terms of biological role, transcriptional activator of a number of genes encoding proteasomal subunits. Binds to the DNA sequence 5'-GAAGGCAAAA-3', enriched in regions upstream of proteasome genes. The protein is Transcriptional regulator RPN4 (RPN4) of Candida albicans (strain SC5314 / ATCC MYA-2876) (Yeast).